We begin with the raw amino-acid sequence, 194 residues long: MMTMTPRDLMRAQYVTRWQIVPTTRSQSVAQHSWAVAMLAMNLWCRRTGGQPGEAATDVELGKIAVMALWHDAPEVFTGDINTPTKIFLNASNALDELENTAGDGYLESMDGGPIRTCVKIADFLEAMYWLMEHGDGHYANNQLHGLNERFHQYLNEHAPLWRDSAVALWKELSDVNAETTTFQRVNYLKANDA.

Arginine 17 provides a ligand contact to dATP. Positions 32, 71, 72, 75, 80, and 123 each coordinate Co(2+).

The protein belongs to the Caudovirales dATP triphosphohydrolase family. Requires Co(2+) as cofactor.

It catalyses the reaction dATP + H2O = 2'-deoxyadenosine + triphosphate + H(+). The catalysed reaction is dADP + H2O = 2'-deoxyadenosine + diphosphate. The enzyme catalyses dAMP + H2O = 2'-deoxyadenosine + phosphate. Its function is as follows. Catalyzes the hydrolysis of dATP, dADP and dAMP into dA. This step is essential for Z-genome synthesis (containing aminoadenine instead of adenine). Specifically removes dATP and its precursor dADP from the nucleotide pool of the host, preventing the incorporation of A into the phage genome and favoring the integration of the Z-base into the viral genome. This chain is dATP triphosphohydrolase (datZ), found in Salmonella phage PMBT28.